Here is a 666-residue protein sequence, read N- to C-terminus: Transmembrane protein 201 (666 aa).

The residue at position 1 (Met1) is an N-acetylmethionine. The Nuclear segment spans residues Met1–Gln213. The chain crosses the membrane as a helical span at residues Val214–Tyr234. At Gly235 to Gln297 the chain is on the perinuclear space side. A helical transmembrane segment spans residues Thr298 to Ile318. Over Arg319–Arg322 the chain is Nuclear. The chain crosses the membrane as a helical span at residues Ile323–His343. At Leu344 to Lys356 the chain is on the perinuclear space side. The chain crosses the membrane as a helical span at residues Phe357–Thr374. The Nuclear segment spans residues Arg375–Gly644. A phosphoserine mark is found at Ser441, Ser444, Ser450, Ser454, Ser466, Ser477, and Ser480. Residues Pro502–Leu581 form a disordered region. Low complexity predominate over residues Pro508–Ser520. Ser529 carries the phosphoserine modification. The chain crosses the membrane as a helical span at residues Leu645–Leu665. Arg666 is a topological domain (perinuclear space).

It belongs to the TMEM201 family. Interacts with SUN2 and LMNA. May bind to Ran GTPase; has a greater affinity for Ran-GTP over Ran-GDP. As to quaternary structure, interacts with EMD.

Its subcellular location is the nucleus inner membrane. The protein localises to the cytoplasm. It localises to the cytoskeleton. The protein resides in the spindle pole. In terms of biological role, critical regulator of angiogenesis and endothelial cell (EC) migration. Promotes the migration of endothelial cells, which is essential for angiogenesis. Interacts with the linker of nucleoskeleton and cytoskeleton (LINC) complex, which plays a vital role in connecting the cell's cytoskeleton to the nuclear envelope. This interaction is essential for maintaining cellular structure and facilitating the movement of endothelial cells, which is critical for proper vascular development. Involved in nuclear movement during fibroblast polarization and migration. Overexpression can recruit Ran GTPase to the nuclear periphery. May define a distinct membrane domain in the vicinity of the mitotic spindle. Involved in the organization of the nuclear envelope implicating EMD, SUN1 and A-type lamina. This Homo sapiens (Human) protein is Transmembrane protein 201 (TMEM201).